The primary structure comprises 581 residues: Glutamyl-tRNA reductase (581 aa).

Residues 49-52 (TCNR), serine 109, 114-116 (EGQ), and glutamine 120 each bind substrate. Cysteine 50 serves as the catalytic Nucleophile. Residue 192 to 197 (GAGSMS) coordinates NADP(+). Residues 292–416 (PAVEDTAVQE…AEAPRPQPVL (125 aa)) are insert.

It belongs to the glutamyl-tRNA reductase family. As to quaternary structure, homodimer.

It catalyses the reaction (S)-4-amino-5-oxopentanoate + tRNA(Glu) + NADP(+) = L-glutamyl-tRNA(Glu) + NADPH + H(+). The protein operates within porphyrin-containing compound metabolism; protoporphyrin-IX biosynthesis; 5-aminolevulinate from L-glutamyl-tRNA(Glu): step 1/2. In terms of biological role, catalyzes the NADPH-dependent reduction of glutamyl-tRNA(Glu) to glutamate 1-semialdehyde (GSA). The protein is Glutamyl-tRNA reductase of Streptomyces coelicolor (strain ATCC BAA-471 / A3(2) / M145).